A 258-amino-acid chain; its full sequence is UPF0246 protein Sfri_2896 (258 aa).

Belongs to the UPF0246 family.

The chain is UPF0246 protein Sfri_2896 from Shewanella frigidimarina (strain NCIMB 400).